Reading from the N-terminus, the 560-residue chain is MKVWMAILISILCWQSSVWAVCPAWSPARAQEEISRLQQQIKQWDDDYWKEGKSEVEDGVYDQLSARLTQWQRCFVSEPRDVMMPPLNGAVMHPVAHTGVRKMADKNALSLWMRERSDLWVQPKVDGVAVTLVYRDGKLNKAISRGNGLKGEDWTQKVSLISAVPQTVSGPLANSTLQGEIFLQREGHIQQQMGGINARAKVAGLMMRQGNSDTLNSLAVFVWAWPDGPQLMTDRLKELATAGFTLTQRYTRAVKNADEVARVRNEWWKAKLPFVTDGVVVRGAKEPESRHWLPGQAEWLVAWKYQPVAQVAEVKAIQFAVGKSGKISVVASLAPVMLDDKKVQRVNIGSVRRWQEWDIAPGDQILVSLAGQGIPRIDDVVWRGAERTKPTPPENRFNPLTCYFASDVCQEQFISRLVWLGSKQVLGLDGIGEAGWRALHQTHRFEHIFSWLLLTPEQLQNTPGIAKSKSAQLWHQFNLARNQPFTRWVMAMGIPLTRAALNASDERSWSQLLFSTEQFWQQLPGTGSGRARQVIEWKENAQIKKLGSWLAAQQITGFEP.

Residue K124 is the N6-AMP-lysine intermediate of the active site.

It belongs to the NAD-dependent DNA ligase family. LigB subfamily.

It catalyses the reaction NAD(+) + (deoxyribonucleotide)n-3'-hydroxyl + 5'-phospho-(deoxyribonucleotide)m = (deoxyribonucleotide)n+m + AMP + beta-nicotinamide D-nucleotide.. Its function is as follows. Catalyzes the formation of phosphodiester linkages between 5'-phosphoryl and 3'-hydroxyl groups in double-stranded DNA using NAD as a coenzyme and as the energy source for the reaction. The polypeptide is DNA ligase B (Shigella flexneri serotype 5b (strain 8401)).